The chain runs to 208 residues: Small ribosomal subunit protein uS4 (208 aa).

A disordered region spans residues 28 to 48 (YMERRPYGPGEHGRARKKQDS). One can recognise an S4 RNA-binding domain in the interval 95-160 (MRLDALVLRA…MPPFQVAAAG (66 aa)).

This sequence belongs to the universal ribosomal protein uS4 family. In terms of assembly, part of the 30S ribosomal subunit. Contacts protein S5. The interaction surface between S4 and S5 is involved in control of translational fidelity.

In terms of biological role, one of the primary rRNA binding proteins, it binds directly to 16S rRNA where it nucleates assembly of the body of the 30S subunit. Functionally, with S5 and S12 plays an important role in translational accuracy. The protein is Small ribosomal subunit protein uS4 of Arthrobacter sp. (strain FB24).